Reading from the N-terminus, the 813-residue chain is Protein translocase subunit SecA 2 (813 aa).

ATP is bound by residues Gln-105, 123–127, and Asp-525; that span reads GEGKT.

This sequence belongs to the SecA family. In terms of assembly, monomer and homodimer. Part of the essential Sec protein translocation apparatus which comprises SecA, SecYEG and auxiliary proteins SecDF-YajC and YidC.

The protein localises to the cell inner membrane. It localises to the cytoplasm. It catalyses the reaction ATP + H2O + cellular proteinSide 1 = ADP + phosphate + cellular proteinSide 2.. Part of the Sec protein translocase complex. Interacts with the SecYEG preprotein conducting channel. Has a central role in coupling the hydrolysis of ATP to the transfer of proteins into and across the cell membrane, serving both as a receptor for the preprotein-SecB complex and as an ATP-driven molecular motor driving the stepwise translocation of polypeptide chains across the membrane. The sequence is that of Protein translocase subunit SecA 2 from Rhodopseudomonas palustris (strain BisA53).